A 154-amino-acid chain; its full sequence is Transcriptional repressor NrdR (154 aa).

Residues 3–34 (CPFCGAHDTKVIDSRLVAEGDQVRRRRECLAC) fold into a zinc finger. The ATP-cone domain occupies 49–139 (PRLIKQDGSR…VYRRFQDLNE (91 aa)).

The protein belongs to the NrdR family. Zn(2+) serves as cofactor.

In terms of biological role, negatively regulates transcription of bacterial ribonucleotide reductase nrd genes and operons by binding to NrdR-boxes. The chain is Transcriptional repressor NrdR from Pseudomonas aeruginosa (strain LESB58).